A 172-amino-acid chain; its full sequence is NAD(P)H-quinone oxidoreductase subunit I, chloroplastic (172 aa).

4Fe-4S ferredoxin-type domains follow at residues 55-84 (GRIHFEFDKCIACEVCVRVCPIDLPVVDWK) and 95-124 (LNYSIDFGICIFCGNCVEYCPTNCLSMTEE). Positions 64, 67, 70, 74, 104, 107, 110, and 114 each coordinate [4Fe-4S] cluster.

Belongs to the complex I 23 kDa subunit family. NDH is composed of at least 16 different subunits, 5 of which are encoded in the nucleus. [4Fe-4S] cluster is required as a cofactor.

It is found in the plastid. The protein localises to the chloroplast thylakoid membrane. It catalyses the reaction a plastoquinone + NADH + (n+1) H(+)(in) = a plastoquinol + NAD(+) + n H(+)(out). It carries out the reaction a plastoquinone + NADPH + (n+1) H(+)(in) = a plastoquinol + NADP(+) + n H(+)(out). Functionally, NDH shuttles electrons from NAD(P)H:plastoquinone, via FMN and iron-sulfur (Fe-S) centers, to quinones in the photosynthetic chain and possibly in a chloroplast respiratory chain. The immediate electron acceptor for the enzyme in this species is believed to be plastoquinone. Couples the redox reaction to proton translocation, and thus conserves the redox energy in a proton gradient. This chain is NAD(P)H-quinone oxidoreductase subunit I, chloroplastic, found in Capsella bursa-pastoris (Shepherd's purse).